The chain runs to 206 residues: Adenylate kinase (206 aa).

Gly-10–Thr-15 serves as a coordination point for ATP. Residues Ser-30–Val-59 form an NMP region. Residues Thr-31, Glu-57–Val-59, Gly-82–Arg-85, and Gln-89 contribute to the AMP site. Residues Arg-120, Arg-124, and Val-133–Tyr-134 contribute to the ATP site. Residues Gly-123–Asp-153 are LID. Arg-161 lines the AMP pocket. Residue Lys-189 participates in ATP binding.

This sequence belongs to the adenylate kinase family. As to quaternary structure, monomer.

The protein resides in the cytoplasm. The enzyme catalyses AMP + ATP = 2 ADP. It functions in the pathway purine metabolism; AMP biosynthesis via salvage pathway; AMP from ADP: step 1/1. Functionally, catalyzes the reversible transfer of the terminal phosphate group between ATP and AMP. Plays an important role in cellular energy homeostasis and in adenine nucleotide metabolism. The protein is Adenylate kinase of Aquifex aeolicus (strain VF5).